A 217-amino-acid polypeptide reads, in one-letter code: MGQKVCAHGFRVGPTLIKDWDSILYAEKHYKTLFIQDLKIRDLINKWFNQAQISRVLIERPSNKSIIININAKKPNIIIGKNGSEIDKLKKAIENMTFLKEVYINIHEVRKFNIDAAIVAQTIAAQLEKRVSFRKAMKTAIQASFKQGGQGIRVSCSGRLGGAEIARTEWYIEGRMPLHTLRADIDYSTAEAITTYGVIGVKVWIYKGEYKENKRYN.

Residues 40-110 (IRDLINKWFN…EVYINIHEVR (71 aa)) form the KH type-2 domain.

Belongs to the universal ribosomal protein uS3 family. In terms of assembly, part of the 30S ribosomal subunit. Forms a tight complex with proteins S10 and S14.

Binds the lower part of the 30S subunit head. Binds mRNA in the 70S ribosome, positioning it for translation. This Rickettsia typhi (strain ATCC VR-144 / Wilmington) protein is Small ribosomal subunit protein uS3.